The chain runs to 467 residues: Chromosomal replication initiator protein DnaA (467 aa).

The interval 1–90 (MSLSLWQQCL…KSVTQTPQAA (90 aa)) is domain I, interacts with DnaA modulators. A domain II region spans residues 91 to 130 (VTSNVAAPAQVAQTQPQRAAPSTRSGWDNVPAPAEPTYRS). Low complexity predominate over residues 97 to 111 (APAQVAQTQPQRAAP). Residues 97–119 (APAQVAQTQPQRAAPSTRSGWDN) are disordered. The interval 131-347 (NVNVKHTFDN…GALNRVIANA (217 aa)) is domain III, AAA+ region. ATP-binding residues include Gly175, Gly177, Lys178, and Thr179. Positions 348-467 (NFTGRAITID…FSNLIRTLSS (120 aa)) are domain IV, binds dsDNA.

This sequence belongs to the DnaA family. In terms of assembly, oligomerizes as a right-handed, spiral filament on DNA at oriC.

It localises to the cytoplasm. Plays an essential role in the initiation and regulation of chromosomal replication. ATP-DnaA binds to the origin of replication (oriC) to initiate formation of the DNA replication initiation complex once per cell cycle. Binds the DnaA box (a 9 base pair repeat at the origin) and separates the double-stranded (ds)DNA. Forms a right-handed helical filament on oriC DNA; dsDNA binds to the exterior of the filament while single-stranded (ss)DNA is stabiized in the filament's interior. The ATP-DnaA-oriC complex binds and stabilizes one strand of the AT-rich DNA unwinding element (DUE), permitting loading of DNA polymerase. After initiation quickly degrades to an ADP-DnaA complex that is not apt for DNA replication. Binds acidic phospholipids. The chain is Chromosomal replication initiator protein DnaA from Escherichia coli O157:H7.